A 790-amino-acid chain; its full sequence is MFTLLRCLGFGVNEPTNTSSSEYVPEYSVEEISNEVAELDSVDPLFQCYKHVFVSLMLVRKMTQAAEDFLESFGGEFDSPCCRVYRLYRHFVNEDDAPAWAIPNVVNEDSYDDYAYLREELDAIDSSFELLNEERELSEITDRLNALRFFPVSKTEALPVANVQEVKLISETYQLLMTFINYSDENIPSEMPAPLLDELGMLPEELGPLNEIEDIKPVAAPITLLSEFRASDNAKPLDIVEIIPDVSPTKPYEAVISGNDWMTLGRIIPTTPVPTIRDVFFSGLSRHGSPEVIQNALDEFLPLHHSIDDKYFQEWVETSDKSLDVDPCRIDLSVFNNWQSSENCYEPRFKTGALSTRKGTQTEALLAIKKRNMNVPNLGQIYDVNSVANSVVNKLLTTVIDPDKLCMFPDFISEGEVSYFQDYIVGKNPDPELYSDPLGVRSIDSYKHMIKSVLKPVEDNSLHLERPMPATITYHDKDIVMSSSPIFLAAAARLMLILRDKITIPSGKFHQLFSIDAEAFDASFHFKEIDFSKFDKSQNELHHLIQERFLKYLGIPNEFLTLWFNAHRKSRISDSKNGVFFNVDFQRRTGDALTYLGNTIVTLACLCHVYDLMDPNVKFVVASGDDSLIGTVEELPRDQEFLFTTLFNLEAKFPHNQPFICSKFLITMPTTSGGKVVLPIPNPLKLLIRLGSKKVNADIFDEWYQSWIDIIGGFNDHHVIRCVAAMTAHRYLRRPSLYLEAALESLGKIFAGKTLCKECLFNEKHESNVKIKPRRVKKSHSDARSRARRA.

In terms of domain architecture, RdRp catalytic spans 524–639 (FHFKEIDFSK…GTVEELPRDQ (116 aa)). The interval 771–790 (IKPRRVKKSHSDARSRARRA) is disordered. Positions 779-790 (SHSDARSRARRA) are enriched in basic and acidic residues.

The protein belongs to the bromoviridae 2a family. In terms of assembly, interacts with replication protein 1a.

The enzyme catalyses RNA(n) + a ribonucleoside 5'-triphosphate = RNA(n+1) + diphosphate. Functionally, RNA-dependent RNA polymerase which replicates the viral genome composed of 3 RNA segments, RNA1, RNA2 and RNA3. This Alfalfa mosaic virus (AMV) protein is RNA-directed RNA polymerase 2a.